Consider the following 239-residue polypeptide: Thymidylate kinase (239 aa).

10-17 (GVNRVGKS) serves as a coordination point for ATP.

The protein belongs to the thymidylate kinase family.

It catalyses the reaction dTMP + ATP = dTDP + ADP. It participates in pyrimidine metabolism; dTTP biosynthesis. Its function is as follows. Catalyzes the conversion of dTMP to dTDP. This is Thymidylate kinase (TMK) from African swine fever virus (isolate Tick/South Africa/Pretoriuskop Pr4/1996) (ASFV).